The following is a 334-amino-acid chain: Inositol 2-dehydrogenase (334 aa).

It belongs to the Gfo/Idh/MocA family. In terms of assembly, homotetramer.

It catalyses the reaction myo-inositol + NAD(+) = scyllo-inosose + NADH + H(+). Functionally, involved in the oxidation of myo-inositol (MI) to 2-keto-myo-inositol (2KMI or 2-inosose). The chain is Inositol 2-dehydrogenase from Cereibacter sphaeroides (strain ATCC 17023 / DSM 158 / JCM 6121 / CCUG 31486 / LMG 2827 / NBRC 12203 / NCIMB 8253 / ATH 2.4.1.) (Rhodobacter sphaeroides).